The sequence spans 440 residues: Adenylosuccinate synthetase (440 aa).

GTP contacts are provided by residues 13–19 (GDEGKGK) and 41–43 (GHT). Catalysis depends on aspartate 14, which acts as the Proton acceptor. 2 residues coordinate Mg(2+): aspartate 14 and glycine 41. IMP contacts are provided by residues 14–17 (DEGK), 39–42 (NAGH), threonine 135, arginine 149, glutamine 230, threonine 245, and arginine 313. The active-site Proton donor is the histidine 42. 309-315 (TVTKRKR) provides a ligand contact to substrate. GTP contacts are provided by residues arginine 315, 341-343 (KLD), and 423-425 (STG).

It belongs to the adenylosuccinate synthetase family. Homodimer. It depends on Mg(2+) as a cofactor.

Its subcellular location is the cytoplasm. It catalyses the reaction IMP + L-aspartate + GTP = N(6)-(1,2-dicarboxyethyl)-AMP + GDP + phosphate + 2 H(+). It participates in purine metabolism; AMP biosynthesis via de novo pathway; AMP from IMP: step 1/2. In terms of biological role, plays an important role in the de novo pathway of purine nucleotide biosynthesis. Catalyzes the first committed step in the biosynthesis of AMP from IMP. In Methylobacillus flagellatus (strain ATCC 51484 / DSM 6875 / VKM B-1610 / KT), this protein is Adenylosuccinate synthetase.